Here is a 556-residue protein sequence, read N- to C-terminus: MSEADARPSNFIRQIIDKDLADGKHTSVHTRFPPEPNGYLHIGHAKSICLNFGIAQDYQGQCNLRFDDTNPEKEDIEYVESIKKDVNWLGFEWDGEVCYSSNYFDKLYEYAIELINKGLAYVDELSPEQIREYRGTLKEPGKPSPYRDRSVEENLALFEKMRAGEFEEGKACLRAKIDMGSSFMVMRDPVLYRVRFATHHQTGDKWCIYPMYDFTHCISDALEGITHSICTLEFMDNRRLYDWVLDNITIDCRPHQYEFSRLNLEYTVMSKRKLNQLVTEKLVNGWDDPRMPTVSGLRRRGFTPASIREFCKRIGVTKQENMIEFSSLESCIRDDLNENAPRAMAVLDPVKVVIENFEVGAVENLTLANHPNKPEMGEREVPFTREVWIEREDFREEANKKYKRLVLGKEVRLRGAYVIKAERVEKDAEGNITTIYCTYDPETLGKNPADGRKVKGVIHWVSADKALPAEIRLYDRLFTVPNPAAAEDFASTINTDSLVVINGFVEPSLASAEAEQGYQFERMGYFCADSKDSTADNLVFNRTVGLRDTWAKIENQ.

A 'HIGH' region motif is present at residues 34 to 44 (PEPNGYLHIGH). ATP contacts are provided by residues 35-37 (EPN) and 41-47 (HIGHAKS). L-glutamine-binding residues include aspartate 67 and tyrosine 212. Residues threonine 231, 261-262 (RL), and 269-271 (MSK) contribute to the ATP site. Positions 268–272 (VMSKR) match the 'KMSKS' region motif.

This sequence belongs to the class-I aminoacyl-tRNA synthetase family. As to quaternary structure, monomer.

Its subcellular location is the cytoplasm. It catalyses the reaction tRNA(Gln) + L-glutamine + ATP = L-glutaminyl-tRNA(Gln) + AMP + diphosphate. In Vibrio parahaemolyticus serotype O3:K6 (strain RIMD 2210633), this protein is Glutamine--tRNA ligase.